A 231-amino-acid polypeptide reads, in one-letter code: Thermonuclease (231 aa).

The N-terminal stretch at 1-26 (MLVMTEYLLSAGICMAIVSILLIGMA) is a signal peptide. 2 propeptides span residues 27–63 (ISNV…SANA) and 64–82 (SQTD…TVYS). A compositionally biased stretch (polar residues) spans 61–73 (ANASQTDNGVNRS). The tract at residues 61 to 86 (ANASQTDNGVNRSGSEDPTVYSATST) is disordered. Asp103 is a Ca(2+) binding site. Residue Arg117 is part of the active site. 2 residues coordinate Ca(2+): Asp122 and Thr123. Catalysis depends on residues Glu125 and Arg169. Over residues 203–219 (HEQHLRKSEAQAKKEKL) the composition is skewed to basic and acidic residues. Residues 203 to 231 (HEQHLRKSEAQAKKEKLNIWSEDNADSGQ) form a disordered region.

Belongs to the thermonuclease family. Ca(2+) is required as a cofactor.

It localises to the secreted. The protein localises to the membrane. It carries out the reaction Endonucleolytic cleavage to nucleoside 3'-phosphates and 3'-phosphooligonucleotide end-products.. Functionally, enzyme that catalyzes the hydrolysis of both DNA and RNA at the 5' position of the phosphodiester bond. In Staphylococcus aureus, this protein is Thermonuclease.